Consider the following 218-residue polypeptide: Ras-related protein Rab-4A (218 aa).

Residues Gly-23, Thr-24, Gly-25, Lys-26, Ser-27, Cys-28, Ser-42, His-44, and Thr-45 each contribute to the GTP site. Position 27 (Ser-27) interacts with Mg(2+). A Switch 1 motif is present at residues 44 to 49 (HTIGVE). Positions 45 and 68 each coordinate Mg(2+). Residues 70–79 (AGQERFRSVT) carry the Switch 2 motif. A GTP-binding site is contributed by Gly-71. A 5-glutamyl serotonin modification is found at Gln-72. GTP contacts are provided by Asn-126, Lys-127, Asp-129, Ala-157, and Leu-158. Ser-190 bears the Phosphoserine mark. Ser-204 carries the post-translational modification Phosphoserine; by CDK1. 2 S-geranylgeranyl cysteine lipidation sites follow: Cys-216 and Cys-218. Position 218 is a cysteine methyl ester (Cys-218).

The protein belongs to the small GTPase superfamily. Rab family. In terms of assembly, interacts with SGSM1, SGSM2 and SGSM3. Interacts with RAB11FIP1, RABEP1, ZFYVE20 and RUFY1. Interacts (membrane-bound form) with NDRG1; the interaction involves NDRG1 in vesicular recycling of E-cadherin. Interacts (in GTP-bound form) with GRIPAP1 (via N-terminus). Interacts with RABEP1 and RBSN. Does not interact with HPS4. Interacts with RABEP2; this interaction may mediate VEGFR2 cell surface expression. Mg(2+) is required as a cofactor. Post-translationally, serotonylation of Gln-72 by TGM2 during activation and aggregation of platelets leads to constitutive activation of GTPase activity. Phosphorylated by CDK1 kinase during mitosis.

It is found in the membrane. Its subcellular location is the cytoplasm. It localises to the early endosome membrane. The protein resides in the recycling endosome membrane. It carries out the reaction GTP + H2O = GDP + phosphate + H(+). Regulated by guanine nucleotide exchange factors (GEFs) which promote the exchange of bound GDP for free GTP. Regulated by GTPase activating proteins (GAPs) which increase the GTP hydrolysis activity. Inhibited by GDP dissociation inhibitors (GDIs). Its function is as follows. The small GTPases Rab are key regulators of intracellular membrane trafficking, from the formation of transport vesicles to their fusion with membranes. Rabs cycle between an inactive GDP-bound form and an active GTP-bound form that is able to recruit to membranes different sets of downstream effectors directly responsible for vesicle formation, movement, tethering and fusion. RAB4A is involved in protein transport. Also plays a role in vesicular traffic. Mediates VEGFR2 endosomal trafficking to enhance VEGFR2 signaling. Acts as a regulator of platelet alpha-granule release during activation and aggregation of platelets. This chain is Ras-related protein Rab-4A, found in Rattus norvegicus (Rat).